The chain runs to 287 residues: Orotidine 5'-phosphate decarboxylase (287 aa).

K99 acts as the Proton donor in catalysis.

This sequence belongs to the OMP decarboxylase family. Type 2 subfamily.

It carries out the reaction orotidine 5'-phosphate + H(+) = UMP + CO2. The protein operates within pyrimidine metabolism; UMP biosynthesis via de novo pathway; UMP from orotate: step 2/2. The sequence is that of Orotidine 5'-phosphate decarboxylase from Clostridium novyi (strain NT).